Reading from the N-terminus, the 278-residue chain is HTH-type transcriptional activator RhaS (278 aa).

The HTH araC/xylS-type domain maps to 174-272 (NLLLAWLEDH…NWSPRDIRQG (99 aa)). DNA-binding regions (H-T-H motif) lie at residues 191 to 212 (DAVA…KQQT) and 239 to 262 (VTDI…RREF).

Binds DNA as a dimer.

It localises to the cytoplasm. In terms of biological role, activates expression of the rhaBAD and rhaT operons. The chain is HTH-type transcriptional activator RhaS from Shigella sonnei (strain Ss046).